The chain runs to 46 residues: Myoregulin (46 aa).

At 1 to 21 (MTGKNWILISTTTPKSLEDEI) the chain is on the cytoplasmic side. Residues 22–42 (VGRLLKILFVIFVDLISIIYV) traverse the membrane as a helical segment. Residues 43 to 46 (VITS) lie on the Lumenal side of the membrane.

In terms of assembly, homooligomer. Monomer. Interacts with ATP2A1/SERCA1. Interacts as a monomer with ATP2A2/SERCA2; the interaction inhibits ATP2A2 activity.

The protein localises to the sarcoplasmic reticulum membrane. Its function is as follows. Inhibits the activity of ATP2A1/SERCA1 ATPase in sarcoplasmic reticulum by decreasing the apparent affinity of the ATPase for Ca(2+), thereby acting as a key regulator of skeletal muscle activity. Its high expression in adult skeletal muscle, suggests that it constitutes the predominant regulator of ATP2A1/SERCA1 in adult skeletal muscle. Also inhibits the activity of ATP2A2/SERCA2 and ATP2A3/SERCA3. This chain is Myoregulin, found in Homo sapiens (Human).